Here is a 224-residue protein sequence, read N- to C-terminus: 7-cyano-7-deazaguanine synthase (224 aa).

Residue 10–20 (LSGGLDSATVV) coordinates ATP. The Zn(2+) site is built by Cys189, Cys199, Cys202, and Cys205.

This sequence belongs to the QueC family. Requires Zn(2+) as cofactor.

It catalyses the reaction 7-carboxy-7-deazaguanine + NH4(+) + ATP = 7-cyano-7-deazaguanine + ADP + phosphate + H2O + H(+). It participates in purine metabolism; 7-cyano-7-deazaguanine biosynthesis. Catalyzes the ATP-dependent conversion of 7-carboxy-7-deazaguanine (CDG) to 7-cyano-7-deazaguanine (preQ(0)). The protein is 7-cyano-7-deazaguanine synthase of Pseudomonas putida (strain ATCC 700007 / DSM 6899 / JCM 31910 / BCRC 17059 / LMG 24140 / F1).